A 364-amino-acid chain; its full sequence is Protein-glutamate methylesterase/protein-glutamine glutaminase (364 aa).

The 118-residue stretch at 7-124 (RALIVDDSAL…SQNMPDMAEE (118 aa)) folds into the Response regulatory domain. D58 carries the post-translational modification 4-aspartylphosphate. A CheB-type methylesterase domain is found at 167–364 (ETTSFVRNVL…MAEEIVKIIS (198 aa)). Catalysis depends on residues S181, H208, and D308.

Belongs to the CheB family. Phosphorylated by CheA. Phosphorylation of the N-terminal regulatory domain activates the methylesterase activity.

It is found in the cytoplasm. It catalyses the reaction [protein]-L-glutamate 5-O-methyl ester + H2O = L-glutamyl-[protein] + methanol + H(+). The catalysed reaction is L-glutaminyl-[protein] + H2O = L-glutamyl-[protein] + NH4(+). Its function is as follows. Involved in chemotaxis. Part of a chemotaxis signal transduction system that modulates chemotaxis in response to various stimuli. Catalyzes the demethylation of specific methylglutamate residues introduced into the chemoreceptors (methyl-accepting chemotaxis proteins or MCP) by CheR. Also mediates the irreversible deamidation of specific glutamine residues to glutamic acid. The chain is Protein-glutamate methylesterase/protein-glutamine glutaminase from Methanosarcina barkeri (strain Fusaro / DSM 804).